The primary structure comprises 433 residues: Sulfhydrylase FUB7 (433 aa).

N6-(pyridoxal phosphate)lysine is present on Lys211.

The protein belongs to the trans-sulfuration enzymes family. It depends on pyridoxal 5'-phosphate as a cofactor.

It participates in mycotoxin biosynthesis. Its function is as follows. Sulfhydrylase; part of the gene cluster that mediates the biosynthesis of fusaric acid, a mycotoxin with low to moderate toxicity to animals and humans, but with high phytotoxic properties. L-aspartate is suggested as fusaric acid amino acid precursor that is activated and further processed to O-acetyl-L-homoserine by cluster enzymes aspartate kinase FUB3 and homoserine O-acetyltransferase FUB5, as well as enzymes of the primary metabolism. The polyketide synthase (PKS) FUB1 generates the triketide trans-2-hexenal which is presumptively released by the hydrolase FUB4 and linked to the NRPS-bound amino acid precursor by NAD(P)-dependent dehydrogenase FUB6. FUB1, FUB4, and the non-canonical NRPS Fub8 may form an enzyme complex. Further processing of the NRPS-bound intermediate might be carried out by FUB6 and the sulfhydrylase FUB7, enabling a spontaneous electrocyclization to close the carbon backbone of fusaric acid. Dihydrofusaric acid is likely to be released via reduction by the thioester reductase (TR) domain of FUB8 whereupon the final oxidation to fusaric acid may (also) be performed by the FMN-dependent dehydrogenase FUB9. This Fusarium oxysporum f. sp. lycopersici (strain 4287 / CBS 123668 / FGSC 9935 / NRRL 34936) (Fusarium vascular wilt of tomato) protein is Sulfhydrylase FUB7.